Reading from the N-terminus, the 315-residue chain is Ribose-phosphate pyrophosphokinase (315 aa).

ATP is bound by residues 41–43 (DGE) and 100–101 (RQ). Mg(2+) is bound by residues His134 and Asp173. Lys196 is a catalytic residue. D-ribose 5-phosphate is bound by residues Arg198, Asp222, and 226–230 (DTAGT).

It belongs to the ribose-phosphate pyrophosphokinase family. Class I subfamily. As to quaternary structure, homohexamer. The cofactor is Mg(2+).

The protein resides in the cytoplasm. The catalysed reaction is D-ribose 5-phosphate + ATP = 5-phospho-alpha-D-ribose 1-diphosphate + AMP + H(+). It functions in the pathway metabolic intermediate biosynthesis; 5-phospho-alpha-D-ribose 1-diphosphate biosynthesis; 5-phospho-alpha-D-ribose 1-diphosphate from D-ribose 5-phosphate (route I): step 1/1. In terms of biological role, involved in the biosynthesis of the central metabolite phospho-alpha-D-ribosyl-1-pyrophosphate (PRPP) via the transfer of pyrophosphoryl group from ATP to 1-hydroxyl of ribose-5-phosphate (Rib-5-P). This chain is Ribose-phosphate pyrophosphokinase, found in Bacillus caldolyticus.